The following is a 525-amino-acid chain: GMP synthase [glutamine-hydrolyzing] (525 aa).

A Glutamine amidotransferase type-1 domain is found at 12–206 (RILIIDFGSQ…THGICGCGGD (195 aa)). Cysteine 90 serves as the catalytic Nucleophile. Residues histidine 180 and glutamate 182 contribute to the active site. The region spanning 207–399 (WTMAAFKDQA…LGLPDEMVGR (193 aa)) is the GMPS ATP-PPase domain. 234–240 (SGGVDSS) is a binding site for ATP.

As to quaternary structure, homodimer.

The catalysed reaction is XMP + L-glutamine + ATP + H2O = GMP + L-glutamate + AMP + diphosphate + 2 H(+). It participates in purine metabolism; GMP biosynthesis; GMP from XMP (L-Gln route): step 1/1. Catalyzes the synthesis of GMP from XMP. In Rhodospirillum rubrum (strain ATCC 11170 / ATH 1.1.1 / DSM 467 / LMG 4362 / NCIMB 8255 / S1), this protein is GMP synthase [glutamine-hydrolyzing].